Here is an 802-residue protein sequence, read N- to C-terminus: Epithelial sodium channel subunit delta (802 aa).

The Cytoplasmic portion of the chain corresponds to 1–250; sequence MRAVLSQKTT…CSRGNRLKTT (250 aa). The segment at 145-211 is disordered; that stretch reads KQPHGGALTS…PPPPKEGHQE (67 aa). Positions 166–176 are enriched in basic residues; sequence CHLKGWQHRPT. Residues 192-205 show a composition bias toward pro residues; the sequence is PPRPGPPSAPPPPP. A helical membrane pass occupies residues 251–271; that stretch reads SWGLLSLGALVALCWQLGLLF. The Extracellular segment spans residues 272 to 694; it reads ERHWHRPVLM…VPQLLSAMGS (423 aa). N-linked (GlcNAc...) asparagine glycans are attached at residues N330 and N548. The helical transmembrane segment at 695–715 threads the bilayer; the sequence is LCSLWFGASVLSLLELLELLL. The Cytoplasmic segment spans residues 716-802; the sequence is DASALTLVLG…GPQPLETLDT (87 aa). Residues 738–777 form a disordered region; that stretch reads RASPASGASSIKPEASQMPPPAGGTSDDPEPSGPHLPRVM.

It belongs to the amiloride-sensitive sodium channel (TC 1.A.6) family. SCNN1D subfamily. As to quaternary structure, can form an alternative heterotrimeric epithelial sodium channel (ENaC), composed of a delta (SCNN1D), beta (SCNN1B), and gamma (SCNN1G) subunit, where the delta (SCNN1D) subunit replaces the alpha (SCNN1A) subunit. In terms of tissue distribution, not specifically expressed in epithelial cells.

The protein localises to the apical cell membrane. It carries out the reaction Na(+)(in) = Na(+)(out). Originally identified and characterized by its inhibition by the diuretic drug amiloride. In terms of biological role, potential alternative pore-forming subunit of the epithelial sodium channel (ENaC), capable of replacing the alpha/SCNN1A subunit, creating a more active channel with distinct properties. ENaC functions in epithelial tissues, where it facilitates the electrodiffusion of sodium ions from the extracellular fluid through the apical membrane of cells, with water following osmotically, regulating sodium balance and fluid homeostasis. This subunit could also function independently as a sodium channel or assemble into other tissue-specific heterotrimeric sodium channels. Functionally, ENaC channels including this isoform exhibit greater conductance. The chain is Epithelial sodium channel subunit delta from Homo sapiens (Human).